Consider the following 199-residue polypeptide: Small ribosomal subunit protein uS4 (199 aa).

Residues 106–170 form the S4 RNA-binding domain; it reads RRLQTIVFRK…SPVANELHPI (65 aa). Residues 177–199 are disordered; that stretch reads PAQRSAEMKEGQGEASEEGETDE.

This sequence belongs to the universal ribosomal protein uS4 family. As to quaternary structure, part of the 30S ribosomal subunit. Contacts protein S5. The interaction surface between S4 and S5 is involved in control of translational fidelity.

In terms of biological role, one of the primary rRNA binding proteins, it binds directly to 16S rRNA where it nucleates assembly of the body of the 30S subunit. Functionally, with S5 and S12 plays an important role in translational accuracy. The sequence is that of Small ribosomal subunit protein uS4 from Thermoplasma acidophilum (strain ATCC 25905 / DSM 1728 / JCM 9062 / NBRC 15155 / AMRC-C165).